A 126-amino-acid polypeptide reads, in one-letter code: Fluoride-specific ion channel FluC (126 aa).

Helical transmembrane passes span 33 to 53 (LPLNVLIVNVIGAFILGVFIV), 64 to 84 (YSLFAAIGFCGSLTTMSSFAL), and 96 to 116 (GALAANIIVNVGLSIGALIGG). G74 and T77 together coordinate Na(+).

This sequence belongs to the fluoride channel Fluc/FEX (TC 1.A.43) family.

Its subcellular location is the cell membrane. It catalyses the reaction fluoride(in) = fluoride(out). Its activity is regulated as follows. Na(+) is not transported, but it plays an essential structural role and its presence is essential for fluoride channel function. Functionally, fluoride-specific ion channel. Important for reducing fluoride concentration in the cell, thus reducing its toxicity. In Nitrosopumilus maritimus (strain SCM1), this protein is Fluoride-specific ion channel FluC.